Reading from the N-terminus, the 269-residue chain is Formamidopyrimidine-DNA glycosylase (269 aa).

The Schiff-base intermediate with DNA role is filled by Pro-2. The active-site Proton donor is the Glu-3. Lys-57 acts as the Proton donor; for beta-elimination activity in catalysis. DNA is bound by residues His-90, Arg-109, and Lys-150. Residues 235–269 (QVYGRKGEPCRVCGTPIVATKHAQRATFYCRHCQK) form an FPG-type zinc finger. Arg-259 functions as the Proton donor; for delta-elimination activity in the catalytic mechanism.

Belongs to the FPG family. Monomer. It depends on Zn(2+) as a cofactor.

It catalyses the reaction Hydrolysis of DNA containing ring-opened 7-methylguanine residues, releasing 2,6-diamino-4-hydroxy-5-(N-methyl)formamidopyrimidine.. The catalysed reaction is 2'-deoxyribonucleotide-(2'-deoxyribose 5'-phosphate)-2'-deoxyribonucleotide-DNA = a 3'-end 2'-deoxyribonucleotide-(2,3-dehydro-2,3-deoxyribose 5'-phosphate)-DNA + a 5'-end 5'-phospho-2'-deoxyribonucleoside-DNA + H(+). Its function is as follows. Involved in base excision repair of DNA damaged by oxidation or by mutagenic agents. Acts as a DNA glycosylase that recognizes and removes damaged bases. Has a preference for oxidized purines, such as 7,8-dihydro-8-oxoguanine (8-oxoG). Has AP (apurinic/apyrimidinic) lyase activity and introduces nicks in the DNA strand. Cleaves the DNA backbone by beta-delta elimination to generate a single-strand break at the site of the removed base with both 3'- and 5'-phosphates. This chain is Formamidopyrimidine-DNA glycosylase, found in Salmonella paratyphi C (strain RKS4594).